The chain runs to 66 residues: Large ribosomal subunit protein bL33c (66 aa).

This sequence belongs to the bacterial ribosomal protein bL33 family.

The protein localises to the plastid. It is found in the chloroplast. This Daucus carota (Wild carrot) protein is Large ribosomal subunit protein bL33c.